We begin with the raw amino-acid sequence, 408 residues long: Translation initiation factor 2 subunit gamma (408 aa).

One can recognise a tr-type G domain in the interval 4–201 (QSEINIGLVG…TIEERIKTPK (198 aa)). The tract at residues 13 to 20 (GHVDHGKT) is G1. Residues D16, T20, G41, and S43 each coordinate Mg(2+). 16–21 (DHGKTT) lines the GTP pocket. Positions 41 to 45 (GISIR) are G2. Zn(2+)-binding residues include C56, C59, C71, and C74. Residues 88-91 (DAPG) form a G3 region. GTP-binding positions include 144 to 147 (NKID) and 179 to 181 (SAQ). The G4 stretch occupies residues 144–147 (NKID). The interval 179-181 (SAQ) is G5.

It belongs to the TRAFAC class translation factor GTPase superfamily. Classic translation factor GTPase family. EIF2G subfamily. Heterotrimer composed of an alpha, a beta and a gamma chain. Requires Mg(2+) as cofactor.

The catalysed reaction is GTP + H2O = GDP + phosphate + H(+). EIF-2 functions in the early steps of protein synthesis by forming a ternary complex with GTP and initiator tRNA. The chain is Translation initiation factor 2 subunit gamma from Methanothermobacter thermautotrophicus (strain ATCC 29096 / DSM 1053 / JCM 10044 / NBRC 100330 / Delta H) (Methanobacterium thermoautotrophicum).